A 192-amino-acid chain; its full sequence is Ion-translocating oxidoreductase complex subunit B (192 aa).

A hydrophobic region spans residues 1–26; that stretch reads MNAIWIAVAAVSLLGLAFGAILGYAS. A 4Fe-4S domain is found at 32 to 91; it reads EDDPVVEKIDEILPQSQCGQCGYPGCRPYAEAISCNGEKINRCAPGGEAVMLKIAELLNV. The [4Fe-4S] cluster site is built by C49, C52, C57, C74, C117, C120, C123, C127, C147, C150, C153, and C157. 4Fe-4S ferredoxin-type domains are found at residues 108–137 and 138–167; these read MVAV…GATR and AMHT…LQPV.

Belongs to the 4Fe4S bacterial-type ferredoxin family. RnfB subfamily. As to quaternary structure, the complex is composed of six subunits: RsxA, RsxB, RsxC, RsxD, RsxE and RsxG. [4Fe-4S] cluster serves as cofactor.

The protein resides in the cell inner membrane. In terms of biological role, part of a membrane-bound complex that couples electron transfer with translocation of ions across the membrane. Required to maintain the reduced state of SoxR. This is Ion-translocating oxidoreductase complex subunit B from Escherichia coli O139:H28 (strain E24377A / ETEC).